The primary structure comprises 666 residues: Collagen alpha-1(XXV) chain (666 aa).

A disordered region spans residues 1-24; the sequence is MLVKKLAGKGGGRESGSEDPRPLG. Over 1 to 33 the chain is Cytoplasmic; it reads MLVKKLAGKGGGRESGSEDPRPLGQRCAGTMPS. Positions 11-21 are enriched in basic and acidic residues; sequence GGRESGSEDPR. Residues 34–54 traverse the membrane as a helical; Signal-anchor for type II membrane protein segment; it reads CTALATLLSVVAVAFCFYLGV. Residues 55–666 are Extracellular-facing; it reads KTNDLQARIA…GLPMPGCWQK (612 aa). Residues 116-168 form a disordered region; the sequence is LECNCPAGPPGKRGKRGRRGESGPPGQPGPQGPPGPKGDKGEQGDQGPRMVFP. Residues 121 to 164 enclose the Collagen-like 1 domain; sequence PAGPPGKRGKRGRRGESGPPGQPGPQGPPGPKGDKGEQGDQGPR. Residues 140 to 151 show a composition bias toward pro residues; sequence PGQPGPQGPPGP. The interval 181-188 is interaction with amyloid-beta peptide; it reads LIKRRLIK. 2 disordered regions span residues 189 to 428 and 445 to 666; these read GDQG…ATEI and LTVT…CWQK. Collagen-like domains lie at 192 to 247, 249 to 308, 311 to 370, 373 to 425, 455 to 514, 529 to 588, and 589 to 648; these read GQAG…QKGS, GAPG…PGSS, GIKG…AGPP, GERG…DPGA, GPQG…KGEK, GPPG…KGAM, and GEPG…DGLD. The segment covering 196–208 has biased composition (pro residues); sequence PPGPPGPPGPRGP. Residues 230–245 are compositionally biased toward low complexity; it reads PGEQGLMGPLGPPGQK. Residues 280 to 290 show a composition bias toward basic and acidic residues; the sequence is EPGKEGEKGDA. Low complexity predominate over residues 336-358; sequence LPGIKGEPGFIGPQGEPGLPGLP. Composition is skewed to basic and acidic residues over residues 361–377 and 398–407; these read KGDR…ERGD and SKGDRGDKGD. The segment covering 457-466 has biased composition (low complexity); it reads QGLQGPKGEQ. Gly residues predominate over residues 494–503; sequence GEKGGLGLPG. Pro residues predominate over residues 528–543; sequence IGPPGPPGPHGPPGPM. The segment covering 615–638 has biased composition (basic and acidic residues); sequence RGEKGDLGEKGEKGFRGVKGEKGE.

Forms homodimers and homotrimers. Binds to the fibrillized forms of amyloid-beta protein 40 (beta-APP40) and amyloid-betad protein 42 (beta-APP42). Found associated with beta-APP42 more frequently than with beta-APP40. In terms of processing, undergoes proteolytic cleavage by furin protease to yield the soluble collagen-like Alzheimer amyloid plaque component. Post-translationally, glycosylated. Hydroxylated on proline and lysine residues. Expressed predominantly in neurons with low levels also detected in heart, testis and eye.

It is found in the membrane. Functionally, inhibits fibrillization of amyloid-beta peptide during the elongation phase. Has also been shown to assemble amyloid fibrils into protease-resistant aggregates. Binds heparin. The polypeptide is Collagen alpha-1(XXV) chain (Mus musculus (Mouse)).